The primary structure comprises 405 residues: Na(+)-translocating NADH-quinone reductase subunit F (405 aa).

Residues Ile3 to Phe23 form a helical membrane-spanning segment. A 2Fe-2S ferredoxin-type domain is found at Gly32–Val124. The [2Fe-2S] cluster site is built by Cys67, Cys73, Cys76, and Cys108. The FAD-binding FR-type domain occupies Val127–Lys267.

The protein belongs to the NqrF family. As to quaternary structure, composed of six subunits; NqrA, NqrB, NqrC, NqrD, NqrE and NqrF. The cofactor is [2Fe-2S] cluster. It depends on FAD as a cofactor.

The protein localises to the cell inner membrane. It catalyses the reaction a ubiquinone + n Na(+)(in) + NADH + H(+) = a ubiquinol + n Na(+)(out) + NAD(+). In terms of biological role, NQR complex catalyzes the reduction of ubiquinone-1 to ubiquinol by two successive reactions, coupled with the transport of Na(+) ions from the cytoplasm to the periplasm. The first step is catalyzed by NqrF, which accepts electrons from NADH and reduces ubiquinone-1 to ubisemiquinone by a one-electron transfer pathway. The sequence is that of Na(+)-translocating NADH-quinone reductase subunit F from Neisseria meningitidis serogroup C / serotype 2a (strain ATCC 700532 / DSM 15464 / FAM18).